The sequence spans 237 residues: Phosphoglycolate phosphatase (237 aa).

Aspartate 15 functions as the Nucleophile in the catalytic mechanism. Aspartate 15, aspartate 17, and aspartate 177 together coordinate Mg(2+).

Belongs to the HAD-like hydrolase superfamily. CbbY/CbbZ/Gph/YieH family. Requires Mg(2+) as cofactor.

The catalysed reaction is 2-phosphoglycolate + H2O = glycolate + phosphate. Its pathway is organic acid metabolism; glycolate biosynthesis; glycolate from 2-phosphoglycolate: step 1/1. Its function is as follows. Specifically catalyzes the dephosphorylation of 2-phosphoglycolate. Is involved in the dissimilation of the intracellular 2-phosphoglycolate formed during the DNA repair of 3'-phosphoglycolate ends, a major class of DNA lesions induced by oxidative stress. The polypeptide is Phosphoglycolate phosphatase (Caulobacter vibrioides (strain ATCC 19089 / CIP 103742 / CB 15) (Caulobacter crescentus)).